The chain runs to 395 residues: F-box only protein 7 (395 aa).

The region spanning asparagine 19 to isoleucine 70 is the F-box domain.

In Arabidopsis thaliana (Mouse-ear cress), this protein is F-box only protein 7 (FBX7).